A 395-amino-acid chain; its full sequence is Chalcone synthase 7 (395 aa).

Residue Cys169 is part of the active site.

Belongs to the thiolase-like superfamily. Chalcone/stilbene synthases family.

It carries out the reaction (E)-4-coumaroyl-CoA + 3 malonyl-CoA + 3 H(+) = 2',4,4',6'-tetrahydroxychalcone + 3 CO2 + 4 CoA. The protein operates within secondary metabolite biosynthesis; flavonoid biosynthesis. In terms of biological role, the primary product of this enzyme is 4,2',4',6'-tetrahydroxychalcone (also termed naringenin-chalcone or chalcone) which can under specific conditions spontaneously isomerize into naringenin. The protein is Chalcone synthase 7 (CSF7) of Picea mariana (Black spruce).